Here is a 118-residue protein sequence, read N- to C-terminus: Holo-[acyl-carrier-protein] synthase (118 aa).

The Mg(2+) site is built by D9 and E52.

Belongs to the P-Pant transferase superfamily. AcpS family. The cofactor is Mg(2+).

Its subcellular location is the cytoplasm. It carries out the reaction apo-[ACP] + CoA = holo-[ACP] + adenosine 3',5'-bisphosphate + H(+). In terms of biological role, transfers the 4'-phosphopantetheine moiety from coenzyme A to a Ser of acyl-carrier-protein. This Frankia casuarinae (strain DSM 45818 / CECT 9043 / HFP020203 / CcI3) protein is Holo-[acyl-carrier-protein] synthase.